The sequence spans 484 residues: Acid alpha-amylase (484 aa).

An N-linked (GlcNAc...) asparagine glycan is attached at Asn-24. Cys-30 and Cys-38 form a disulfide bridge. Trp-83 is a binding site for substrate. A Ca(2+)-binding site is contributed by Asp-121. His-122 contributes to the substrate binding site. An intrachain disulfide couples Cys-150 to Cys-164. Asn-157 carries an N-linked (GlcNAc...) asparagine glycan. Ca(2+)-binding residues include Glu-162 and Asp-175. Residue Asn-197 is glycosylated (N-linked (GlcNAc...) asparagine). Arg-204 is a binding site for substrate. Ca(2+) is bound by residues Asp-206, Glu-210, and Glu-230. Asp-206 serves as the catalytic Nucleophile. Substrate is bound at residue Leu-209 to Glu-210. The active-site Proton donor is the Glu-230. Gly-234 serves as a coordination point for substrate. The cysteines at positions 240 and 283 are disulfide-linked. Positions 297 and 344 each coordinate substrate. Cys-440 and Cys-475 form a disulfide bridge.

The protein belongs to the glycosyl hydrolase 13 family. Monomer. The cofactor is Ca(2+).

Its subcellular location is the secreted. The enzyme catalyses Endohydrolysis of (1-&gt;4)-alpha-D-glucosidic linkages in polysaccharides containing three or more (1-&gt;4)-alpha-linked D-glucose units.. This Aspergillus niger protein is Acid alpha-amylase.